The chain runs to 461 residues: Deoxyhypusine synthase (461 aa).

Residues 166–167 (EH), Glu331, His377, 403–405 (GSD), and 412–418 (EAVSWGK) each bind spermidine. Lys418 serves as the catalytic Nucleophile. The chain crosses the membrane as a helical span at residues 428 to 448 (VYSEVTIVFPLIVVHVFVAWV).

The protein belongs to the deoxyhypusine synthase family. Heterotetramer formed by a homodimer of the non-catalytic regulatory subunit DHSp and a homodimer of the catalytic subunit DHSc where DHSc appears to bind spermidine and DHSp appears to bind NAD(+). NAD(+) is required as a cofactor.

The protein localises to the membrane. The catalysed reaction is [eIF5A protein]-L-lysine + spermidine = [eIF5A protein]-deoxyhypusine + propane-1,3-diamine. It participates in protein modification; eIF5A hypusination. Allosterically activated by DHSp. Inhibited by spermididine analog N1-guanyl-1,7-diamineoheptane (GC7). In association with the non-catalytic regulatory subunit DHSp, catalyzes the NAD-dependent oxidative cleavage of spermidine and the subsequent transfer of the butylamine moiety of spermidine to the epsilon-amino group of a specific lysine residue of the eIF5A precursor protein to form the intermediate deoxyhypusine residue. Regulates protein levels of its regulatory subunit DHSp. Required for cell growth and survival. This is Deoxyhypusine synthase from Trypanosoma brucei brucei (strain 927/4 GUTat10.1).